The chain runs to 3391 residues: Genome polyprotein (3391 aa).

The tract at residues 1-15 (MNDQRKEAKNTPFNM) is interaction with host EXOC1. Residues 1-101 (MNDQRKEAKN…LNILNRRRRS (101 aa)) are Cytoplasmic-facing. The segment at 37-72 (MLQGRGPLKLYMALVAFLRFLTIPPTAGILKRWGTI) is hydrophobic; homodimerization of capsid protein C. The propeptide at 101–114 (SAGMIIMLIPTVMA) is ER anchor for the Capsid protein C, removed in mature form by serine protease NS3. A propeptide spans 101 to 114 (SAGMIIMLIPTVMA) (ER anchor for the capsid protein C, removed in mature form by serine protease NS3). The chain crosses the membrane as a helical span at residues 102–122 (AGMIIMLIPTVMAFHLTTRNG). Residues 123–242 (EPHMIVSRQE…HVQRIETWIL (120 aa)) lie on the Extracellular side of the membrane. The N-linked (GlcNAc...) asparagine; by host glycan is linked to Asn183. A helical transmembrane segment spans residues 243–260 (RHPGFTMMAAILAYTIGT). Position 261 (Thr261) is a topological domain, cytoplasmic. Residues 262 to 280 (HFQRALILILLTAVTPSMT) traverse the membrane as a helical segment. Topologically, residues 281 to 727 (MRCIGMSNRD…QVFGAIYGAA (447 aa)) are extracellular. Intrachain disulfides connect Cys283-Cys310, Cys340-Cys401, Cys354-Cys385, and Cys372-Cys396. Asn347 is a glycosylation site (N-linked (GlcNAc...) asparagine; by host). Positions 378–391 (DRGWGNGCGLFGKG) are fusion peptide. A glycan (N-linked (GlcNAc...) asparagine; by host) is linked at Asn433. Cystine bridges form between Cys465–Cys565 and Cys582–Cys613. Residues 728 to 748 (FSGVSWTMKILIGVIITWIGM) form a helical membrane-spanning segment. At 749-752 (NSRS) the chain is on the cytoplasmic side. Residues 753–773 (TSLSVTLVLVGIVTLYLGVMV) traverse the membrane as a helical segment. At 774-1195 (QADSGCVVSW…MVGATMTDDI (422 aa)) the chain is on the extracellular side. 6 disulfide bridges follow: Cys779–Cys790, Cys830–Cys918, Cys954–Cys998, Cys1055–Cys1104, Cys1066–Cys1088, and Cys1087–Cys1091. Residues Asn905 and Asn982 are each glycosylated (N-linked (GlcNAc...) asparagine; by host). N-linked (GlcNAc...) asparagine; by host glycosylation is present at Asn1134. Residues 1196–1220 (GMGVTYLALLAAFKVRPTFAAGLLL) traverse the membrane as a helical segment. The Cytoplasmic segment spans residues 1221–1226 (RKLTSK). The chain crosses the membrane as a helical span at residues 1227–1245 (ELMMTTIGIVLSSQSTIPE). Residues 1246-1269 (TILELTDALALGMMVLKMVRNMEK) are Lumenal-facing. The chain crosses the membrane as a helical span at residues 1270–1290 (YQLAVTIMAILCVPNAVILQN). Residue Ala1291 is a topological domain, cytoplasmic. Residues 1292-1310 (WKVSCTILAVVSVSPLFLT) form a helical membrane-spanning segment. The Lumenal segment spans residues 1311–1317 (SSQQKTD). A helical transmembrane segment spans residues 1318–1338 (WIPLALTIKGLNPTAIFLTTL). The Cytoplasmic segment spans residues 1339–1346 (SRTSKKRS). A helical transmembrane segment spans residues 1347–1367 (WPLNEAIMAVGMVSILASSLL). Topologically, residues 1368-1370 (KND) are lumenal. Residues 1371 to 1391 (IPMTGPLVAGGLLTVCYVLTG) form a helical membrane-spanning segment. Residues 1392-1447 (RSADLELERAADVKWEDQAEISGSSPILSITISEDGSMSIKNEEEEQTLTILIRRG) are Cytoplasmic-facing. The segment at 1398 to 1437 (LERAADVKWEDQAEISGSSPILSITISEDGSMSIKNEEEE) is interacts with and activates NS3 protease. The helical intramembrane region spans 1448 to 1468 (LLVISGLFPVSIPITAAAWYL). The Cytoplasmic segment spans residues 1469–2147 (WEVKKQRAGV…LSELPETLET (679 aa)). Positions 1476 to 1653 (AGVLWDVPSP…EKSIEDNPEI (178 aa)) constitute a Peptidase S7 domain. Residues His1526, Asp1550, and Ser1610 each act as charge relay system; for serine protease NS3 activity in the active site. One can recognise a Helicase ATP-binding domain in the interval 1655–1811 (DDIFRKRRLT…QSNAPIIDEE (157 aa)). Residues 1659–1662 (RKRR) are important for RNA-binding. 1668–1675 (LHPGAGKT) lines the ATP pocket. Residues 1759 to 1762 (DEAH) carry the DEAH box motif. Residues 1821-1988 (SGHEWVTDFK…IIPSMFEPER (168 aa)) form the Helicase C-terminal domain. An N6-acetyllysine; by host modification is found at Lys1863. A helical transmembrane segment spans residues 2148–2168 (LLLLTLLATVTGGIFLFLMSA). Over 2169–2170 (RG) the chain is Lumenal. The segment at residues 2171–2191 (IGKMTLGMCCIITASILLWYA) is an intramembrane region (helical). Position 2192 (Gln2192) is a topological domain, lumenal. Residues 2193–2213 (IQPHWIAASIILEFFLIVLLI) form a helical membrane-spanning segment. Residues 2214 to 2228 (PEPEKQRTPQDNQLT) lie on the Cytoplasmic side of the membrane. Residues 2229-2249 (YVVIAILTVVAATMANEMGFL) form a helical membrane-spanning segment. At 2250 to 2274 (EKTKKDLGLGSIATQQPESNILDID) the chain is on the lumenal side. The segment at residues 2275 to 2295 (LRPASAWTLYAVATTFVTPML) is an intramembrane region (helical). The Lumenal segment spans residues 2296–2316 (RHSIENSSVNVSLTAIANQAT). Asn2301 and Asn2305 each carry an N-linked (GlcNAc...) asparagine; by host glycan. The helical intramembrane region spans 2317-2337 (VLMGLGKGWPLSKMDIGVPLL). At 2338-2347 (AIGCYSQVNP) the chain is on the lumenal side. The chain crosses the membrane as a helical span at residues 2348 to 2368 (TTLTAALFLLVAHYAIIGPAL). Residues 2369-2413 (QAKASREAQKRAAAGIMKNPTVDGITVIDLDPIPYDPKFEKQLGQ) lie on the Cytoplasmic side of the membrane. A helical membrane pass occupies residues 2414-2434 (VMLLVLCVTQVLMMRTTWALC). At 2435–2459 (EALTLATGPISTLSEGNPGRFWNTT) the chain is on the lumenal side. Residue Asn2457 is glycosylated (N-linked (GlcNAc...) asparagine; by host). A helical membrane pass occupies residues 2460–2480 (IAVSMANIFRGSYLAGAGLLF). The Cytoplasmic portion of the chain corresponds to 2481–3391 (SIMKNTTNTR…REEEEAGVLW (911 aa)). The region spanning 2493 to 2755 (TGNIGETLGE…DVDLGSGTRN (263 aa)) is the mRNA cap 0-1 NS5-type MT domain. Ser2547 is a binding site for S-adenosyl-L-methionine. A Phosphoserine modification is found at Ser2547. The active-site For 2'-O-MTase activity is Lys2552. Residues 2568–2571 (VVDL) carry the SUMO-interacting motif motif. S-adenosyl-L-methionine is bound by residues Gly2577, Trp2578, Thr2595, Lys2596, Asp2622, and Val2623. Catalysis depends on Asp2637, which acts as the For 2'-O-MTase activity. Ile2638 is an S-adenosyl-L-methionine binding site. Active-site for 2'-O-MTase activity residues include Lys2672 and Glu2708. Residue Tyr2710 participates in S-adenosyl-L-methionine binding. 4 residues coordinate Zn(2+): Glu2929, His2933, Cys2938, and Cys2941. Residues 3020 to 3169 (AMYADDTAGW…PLDDRLPSAL (150 aa)) enclose the RdRp catalytic domain. Zn(2+) is bound by residues His3203, Cys3219, and Cys3338.

In the N-terminal section; belongs to the class I-like SAM-binding methyltransferase superfamily. mRNA cap 0-1 NS5-type methyltransferase family. Homodimer. Interacts (via N-terminus) with host EXOC1 (via C-terminus); this interaction results in EXOC1 degradation through the proteasome degradation pathway. In terms of assembly, forms heterodimers with envelope protein E in the endoplasmic reticulum and Golgi. As to quaternary structure, homodimer; in the endoplasmic reticulum and Golgi. Interacts with protein prM. Interacts with non-structural protein 1. Homodimer; Homohexamer when secreted. Interacts with envelope protein E. Interacts with host PRKAA1. In terms of assembly, interacts (via N-terminus) with serine protease NS3. As to quaternary structure, forms a heterodimer with serine protease NS3. May form homooligomers. Forms a heterodimer with NS2B. Interacts with NS4B. Interacts with unphosphorylated RNA-directed RNA polymerase NS5; this interaction stimulates RNA-directed RNA polymerase NS5 guanylyltransferase activity. Interacts with host SHFL. In terms of assembly, interacts with host MAVS; this interaction inhibits the synthesis of IFN-beta. Interacts with host SHFL. Interacts with host AUP1; the interaction occurs in the presence of Dengue virus NS4B and induces lipophagy which facilitates production of virus progeny particles. May interact with host SRPRA and SEC61G. As to quaternary structure, interacts with serine protease NS3. Homodimer. Interacts with host STAT2; this interaction inhibits the phosphorylation of the latter, and, when all viral proteins are present (polyprotein), targets STAT2 for degradation. Interacts with serine protease NS3. Interacts with host PAF1 complex; the interaction may prevent the recruitment of the PAF1 complex to interferon-responsive genes, and thus reduces the immune response. Specific enzymatic cleavages in vivo yield mature proteins. Cleavages in the lumen of endoplasmic reticulum are performed by host signal peptidase, whereas cleavages in the cytoplasmic side are performed by serine protease NS3. Signal cleavage at the 2K-4B site requires a prior NS3 protease-mediated cleavage at the 4A-2K site. In terms of processing, cleaved in post-Golgi vesicles by a host furin, releasing the mature small envelope protein M, and peptide pr. This cleavage is incomplete as up to 30% of viral particles still carry uncleaved prM. Post-translationally, N-glycosylated. N-glycosylated. The excreted form is glycosylated and this is required for efficient secretion of the protein from infected cells. In terms of processing, acetylated by host KAT5. Acetylation modulates NS3 RNA-binding and unwinding activities and plays an important positive role for viral replication. Post-translationally, sumoylation of RNA-directed RNA polymerase NS5 increases NS5 protein stability allowing proper viral RNA replication. Phosphorylated on serines residues. This phosphorylation may trigger NS5 nuclear localization.

It localises to the virion. The protein localises to the host nucleus. Its subcellular location is the host cytoplasm. The protein resides in the host perinuclear region. It is found in the secreted. It localises to the virion membrane. The protein localises to the host endoplasmic reticulum membrane. Its subcellular location is the host mitochondrion. The enzyme catalyses Selective hydrolysis of -Xaa-Xaa-|-Yaa- bonds in which each of the Xaa can be either Arg or Lys and Yaa can be either Ser or Ala.. The catalysed reaction is RNA(n) + a ribonucleoside 5'-triphosphate = RNA(n+1) + diphosphate. It carries out the reaction a ribonucleoside 5'-triphosphate + H2O = a ribonucleoside 5'-diphosphate + phosphate + H(+). It catalyses the reaction ATP + H2O = ADP + phosphate + H(+). The enzyme catalyses a 5'-end (5'-triphosphoguanosine)-ribonucleoside in mRNA + S-adenosyl-L-methionine = a 5'-end (N(7)-methyl 5'-triphosphoguanosine)-ribonucleoside in mRNA + S-adenosyl-L-homocysteine. The catalysed reaction is a 5'-end (N(7)-methyl 5'-triphosphoguanosine)-ribonucleoside in mRNA + S-adenosyl-L-methionine = a 5'-end (N(7)-methyl 5'-triphosphoguanosine)-(2'-O-methyl-ribonucleoside) in mRNA + S-adenosyl-L-homocysteine + H(+). Functionally, plays a role in virus budding by binding to the cell membrane and gathering the viral RNA into a nucleocapsid that forms the core of a mature virus particle. During virus entry, may induce genome penetration into the host cytoplasm after hemifusion induced by the surface proteins. Can migrate to the cell nucleus where it modulates host functions. Overcomes the anti-viral effects of host EXOC1 by sequestering and degrading the latter through the proteasome degradation pathway. Inhibits RNA silencing by interfering with host Dicer. Its function is as follows. Prevents premature fusion activity of envelope proteins in trans-Golgi by binding to envelope protein E at pH6.0. After virion release in extracellular space, gets dissociated from E dimers. In terms of biological role, acts as a chaperone for envelope protein E during intracellular virion assembly by masking and inactivating envelope protein E fusion peptide. prM is the only viral peptide matured by host furin in the trans-Golgi network probably to avoid catastrophic activation of the viral fusion activity in acidic Golgi compartment prior to virion release. prM-E cleavage is inefficient, and many virions are only partially matured. These uncleaved prM would play a role in immune evasion. Functionally, may play a role in virus budding. Exerts cytotoxic effects by activating a mitochondrial apoptotic pathway through M ectodomain. May display a viroporin activity. Binds to host cell surface receptor and mediates fusion between viral and cellular membranes. Envelope protein is synthesized in the endoplasmic reticulum in the form of heterodimer with protein prM. They play a role in virion budding in the ER, and the newly formed immature particle is covered with 60 spikes composed of heterodimer between precursor prM and envelope protein E. The virion is transported to the Golgi apparatus where the low pH causes dissociation of PrM-E heterodimers and formation of E homodimers. prM-E cleavage is inefficient, and many virions are only partially matured. These uncleaved prM would play a role in immune evasion. Its function is as follows. Involved in immune evasion, pathogenesis and viral replication. Once cleaved off the polyprotein, is targeted to three destinations: the viral replication cycle, the plasma membrane and the extracellular compartment. Essential for viral replication. Required for formation of the replication complex and recruitment of other non-structural proteins to the ER-derived membrane structures. Excreted as a hexameric lipoparticle that plays a role against host immune response. Antagonizing the complement function. Binds to the host macrophages and dendritic cells. Inhibits signal transduction originating from Toll-like receptor 3 (TLR3). Mediates complement activation, which may contribute to the pathogenesis of the vascular leakage that occurs in severe dengue disease. Activates autophagy through the AMPK/ERK/mTOR signaling pathway. Mechanistically, acts as the assembly platform for STK11-AMPK interactions and promotes STK11-AMPK interactions. In turn, promotes phosphorylation of the AMPK kinase structural domain and activates AMPK, thereby positively regulating the AMPK/ERK/mTOR signaling pathway and inducing autophagy. In terms of biological role, disrupts the host endothelial glycocalyx layer of host pulmonary microvascular endothelial cells, inducing degradation of sialic acid and shedding of heparan sulfate proteoglycans. NS1 induces expression of sialidases, heparanase, and activates cathepsin L, which activates heparanase via enzymatic cleavage. These effects are probably linked to the endothelial hyperpermeability observed in severe dengue disease. Functionally, component of the viral RNA replication complex that functions in virion assembly and antagonizes the host immune response. Required cofactor for the serine protease function of NS3. May have membrane-destabilizing activity and form viroporins. Its function is as follows. Displays three enzymatic activities: serine protease, NTPase and RNA helicase. NS3 serine protease, in association with NS2B, performs its autocleavage and cleaves the polyprotein at dibasic sites in the cytoplasm: C-prM, NS2A-NS2B, NS2B-NS3, NS3-NS4A, NS4A-2K and NS4B-NS5. NS3 RNA helicase binds RNA and unwinds dsRNA in the 3' to 5' direction. In terms of biological role, regulates the ATPase activity of the NS3 helicase activity. NS4A allows NS3 helicase to conserve energy during unwinding. Plays a role in the inhibition of the host innate immune response. Interacts with host MAVS and thereby prevents the interaction between RIGI and MAVS. In turn, IFN-beta production is impaired. Interacts with host AUP1 which mediates induction of lipophagy in host cells and facilitates production of virus progeny particles. Functionally, functions as a signal peptide for NS4B and is required for the interferon antagonism activity of the latter. Induces the formation of ER-derived membrane vesicles where the viral replication takes place. Inhibits interferon (IFN)-induced host STAT1 phosphorylation and nuclear translocation, thereby preventing the establishment of cellular antiviral state by blocking the IFN-alpha/beta pathway. Its function is as follows. Replicates the viral (+) and (-) RNA genome, and performs the capping of genomes in the cytoplasm. NS5 methylates viral RNA cap at guanine N-7 and ribose 2'-O positions. Besides its role in RNA genome replication, also prevents the establishment of cellular antiviral state by blocking the interferon-alpha/beta (IFN-alpha/beta) signaling pathway. Inhibits host TYK2 and STAT2 phosphorylation, thereby preventing activation of JAK-STAT signaling pathway. May reduce immune responses by preventing the recruitment of the host PAF1 complex to interferon-responsive genes. The protein is Genome polyprotein of Dengue virus type 2 (strain 16681-PDK53) (DENV-2).